Consider the following 33-residue polypeptide: Pardaxin P-4 (33 aa).

It belongs to the pardaxin family. Monomer. In aqueous solution exists as a tetramer.

Its subcellular location is the secreted. It is found in the target cell membrane. Functionally, exhibits unusual shark repellent and surfactant properties. Forms voltage-dependent, ion-permeable channels in membranes. At high concentration causes cell membrane lysis. The chain is Pardaxin P-4 from Pardachirus marmoratus (Finless sole).